The primary structure comprises 538 residues: Bifunctional purine biosynthesis protein PurH (538 aa).

In terms of domain architecture, MGS-like spans 6-158; it reads KHIPAPDLHR…KNHAYVATVV (153 aa).

It belongs to the PurH family.

The catalysed reaction is (6R)-10-formyltetrahydrofolate + 5-amino-1-(5-phospho-beta-D-ribosyl)imidazole-4-carboxamide = 5-formamido-1-(5-phospho-D-ribosyl)imidazole-4-carboxamide + (6S)-5,6,7,8-tetrahydrofolate. It catalyses the reaction IMP + H2O = 5-formamido-1-(5-phospho-D-ribosyl)imidazole-4-carboxamide. Its pathway is purine metabolism; IMP biosynthesis via de novo pathway; 5-formamido-1-(5-phospho-D-ribosyl)imidazole-4-carboxamide from 5-amino-1-(5-phospho-D-ribosyl)imidazole-4-carboxamide (10-formyl THF route): step 1/1. It participates in purine metabolism; IMP biosynthesis via de novo pathway; IMP from 5-formamido-1-(5-phospho-D-ribosyl)imidazole-4-carboxamide: step 1/1. The protein is Bifunctional purine biosynthesis protein PurH of Brucella abortus (strain S19).